A 506-amino-acid chain; its full sequence is Glutamate--tRNA ligase (506 aa).

The 'HIGH' region signature appears at 24–34; sequence PSPTGLQHIGG. 4 residues coordinate Zn(2+): Cys121, Cys123, Cys148, and His150. A 'KMSKS' region motif is present at residues 266 to 270; that stretch reads KLSKR. Lys269 is an ATP binding site.

This sequence belongs to the class-I aminoacyl-tRNA synthetase family. Glutamate--tRNA ligase type 1 subfamily. In terms of assembly, monomer. Zn(2+) serves as cofactor.

It localises to the cytoplasm. The enzyme catalyses tRNA(Glu) + L-glutamate + ATP = L-glutamyl-tRNA(Glu) + AMP + diphosphate. Functionally, catalyzes the attachment of glutamate to tRNA(Glu) in a two-step reaction: glutamate is first activated by ATP to form Glu-AMP and then transferred to the acceptor end of tRNA(Glu). This chain is Glutamate--tRNA ligase, found in Borrelia duttonii (strain Ly).